Here is a 40-residue protein sequence, read N- to C-terminus: Small polypeptide DEVIL 3 (40 aa).

Residues 9-40 form a required for DVL/RTFL small polypeptide activity region; the sequence is PCNKKLGGYLKEQKGRLYIIRRCVVMLICWHD. A helical transmembrane segment spans residues 12–28; it reads KKLGGYLKEQKGRLYII.

Belongs to the DVL/RTFL small polypeptides family. In terms of tissue distribution, mostly expressed in flowers and stems, and, to a lower extent, in roots and leaves.

The protein localises to the cell membrane. In terms of biological role, small polypeptide acting as a regulatory molecule which coordinates cellular responses required for differentiation, growth and development, including leaves shape, pedicule elongation, inflorescence organization and fruit maturation, probably by restricting polar cell proliferation in lateral organs and coordinating socket cell recruitment and differentiation at trichome sites. The protein is Small polypeptide DEVIL 3 of Arabidopsis thaliana (Mouse-ear cress).